The chain runs to 541 residues: Chaperonin GroEL 2 (541 aa).

ATP is bound by residues 29–32 (TLGP), 86–90 (DGTTT), G413, and D492.

This sequence belongs to the chaperonin (HSP60) family. Forms a cylinder of 14 subunits composed of two heptameric rings stacked back-to-back. Interacts with the co-chaperonin GroES.

The protein resides in the cytoplasm. It carries out the reaction ATP + H2O + a folded polypeptide = ADP + phosphate + an unfolded polypeptide.. Its function is as follows. Together with its co-chaperonin GroES, plays an essential role in assisting protein folding. The GroEL-GroES system forms a nano-cage that allows encapsulation of the non-native substrate proteins and provides a physical environment optimized to promote and accelerate protein folding. This chain is Chaperonin GroEL 2, found in Nocardia farcinica (strain IFM 10152).